Consider the following 237-residue polypeptide: Phosphoribosylaminoimidazole-succinocarboxamide synthase (237 aa).

Belongs to the SAICAR synthetase family.

The catalysed reaction is 5-amino-1-(5-phospho-D-ribosyl)imidazole-4-carboxylate + L-aspartate + ATP = (2S)-2-[5-amino-1-(5-phospho-beta-D-ribosyl)imidazole-4-carboxamido]succinate + ADP + phosphate + 2 H(+). The protein operates within purine metabolism; IMP biosynthesis via de novo pathway; 5-amino-1-(5-phospho-D-ribosyl)imidazole-4-carboxamide from 5-amino-1-(5-phospho-D-ribosyl)imidazole-4-carboxylate: step 1/2. The polypeptide is Phosphoribosylaminoimidazole-succinocarboxamide synthase (Halalkalibacterium halodurans (strain ATCC BAA-125 / DSM 18197 / FERM 7344 / JCM 9153 / C-125) (Bacillus halodurans)).